A 258-amino-acid chain; its full sequence is Deoxyribose-phosphate aldolase (258 aa).

The active-site Proton donor/acceptor is the Asp-102. The active-site Schiff-base intermediate with acetaldehyde is Lys-165. Residue Lys-199 is the Proton donor/acceptor of the active site.

It belongs to the DeoC/FbaB aldolase family. DeoC type 2 subfamily.

Its subcellular location is the cytoplasm. The enzyme catalyses 2-deoxy-D-ribose 5-phosphate = D-glyceraldehyde 3-phosphate + acetaldehyde. Its pathway is carbohydrate degradation; 2-deoxy-D-ribose 1-phosphate degradation; D-glyceraldehyde 3-phosphate and acetaldehyde from 2-deoxy-alpha-D-ribose 1-phosphate: step 2/2. Functionally, catalyzes a reversible aldol reaction between acetaldehyde and D-glyceraldehyde 3-phosphate to generate 2-deoxy-D-ribose 5-phosphate. The sequence is that of Deoxyribose-phosphate aldolase from Vibrio parahaemolyticus serotype O3:K6 (strain RIMD 2210633).